Consider the following 100-residue polypeptide: uncharacterized protein (100 aa).

The protein resides in the cytoplasm. Its subcellular location is the endoplasmic reticulum. This is an uncharacterized protein from Schizosaccharomyces pombe (strain 972 / ATCC 24843) (Fission yeast).